We begin with the raw amino-acid sequence, 226 residues long: Orotate phosphoribosyltransferase (226 aa).

Lys29 contacts 5-phospho-alpha-D-ribose 1-diphosphate. 37–38 (FF) provides a ligand contact to orotate. Residues 75–76 (YK), Arg101, Lys102, Lys105, His107, and 126–134 (DDVISAGTS) contribute to the 5-phospho-alpha-D-ribose 1-diphosphate site. Orotate-binding residues include Ser130 and Arg158.

Belongs to the purine/pyrimidine phosphoribosyltransferase family. PyrE subfamily. In terms of assembly, homodimer. It depends on Mg(2+) as a cofactor.

It catalyses the reaction orotidine 5'-phosphate + diphosphate = orotate + 5-phospho-alpha-D-ribose 1-diphosphate. It participates in pyrimidine metabolism; UMP biosynthesis via de novo pathway; UMP from orotate: step 1/2. Its function is as follows. Catalyzes the transfer of a ribosyl phosphate group from 5-phosphoribose 1-diphosphate to orotate, leading to the formation of orotidine monophosphate (OMP). In Ralstonia nicotianae (strain ATCC BAA-1114 / GMI1000) (Ralstonia solanacearum), this protein is Orotate phosphoribosyltransferase.